Reading from the N-terminus, the 409-residue chain is Patellin-6 (409 aa).

One can recognise a CRAL-TRIO domain in the interval 116–294 (EKLTEEDLGF…QYGGLSRPTD (179 aa)). Residues 270 to 404 (AETLYKFIRP…VAAYRYTVRK (135 aa)) form the GOLD domain.

It belongs to the patellin family.

It localises to the membrane. It is found in the cytoplasm. Carrier protein that may be involved in membrane-trafficking events associated with cell-plate formation during cytokinesis. Binds to some hydrophobic molecules such as phosphoinositides and promotes their transfer between the different cellular sites. This is Patellin-6 (PATL6) from Arabidopsis thaliana (Mouse-ear cress).